We begin with the raw amino-acid sequence, 468 residues long: 55 kDa erythrocyte membrane protein (468 aa).

Residues 73 to 154 form the PDZ domain; that stretch reads LVQFEKVTEE…MVSIKVIPNQ (82 aa). Residues 160–230 form the SH3 domain; sequence ALQMFMRAQF…PSPELQEWRV (71 aa). Residues 284–453 enclose the Guanylate kinase-like domain; the sequence is RKTLVLIGAS…SLKLLEEAFE (170 aa).

This sequence belongs to the MAGUK family.

It is found in the membrane. The protein localises to the cell projection. The protein resides in the stereocilium. May play a role in the regulation of neutrophil polarization. The polypeptide is 55 kDa erythrocyte membrane protein (MPP1) (Gallus gallus (Chicken)).